Here is a 313-residue protein sequence, read N- to C-terminus: Probable cell division protein WhiA (313 aa).

The segment at residues 274–308 is a DNA-binding region (H-T-H motif); sequence SLKELGELVPGGPISKSGVNHRLRKLNAYADELRA.

The protein belongs to the WhiA family.

Involved in cell division and chromosome segregation. The protein is Probable cell division protein WhiA of Limosilactobacillus reuteri subsp. reuteri (strain JCM 1112) (Lactobacillus reuteri).